The chain runs to 462 residues: Chitinase-like mite allergen Der p 18.0101 (462 aa).

Residues 1-25 (MTRLSFTVLIFLAAYFGSNIRPNVA) form the signal peptide. The GH18 domain maps to 29–378 (PKTVCYYESW…HAINSNYFRG (350 aa)). A disulfide bond links C33 and C58. N-linked (GlcNAc...) asparagine glycans are attached at residues N338 and N441. A Chitin-binding type-2 domain is found at 404 to 462 (VFHCHQEGFFRDKTYCAKYYECKKGDFGLEQTVHHCPNHSQAFDEVSRTCVDHAKIPGC). A disulfide bond links C439 and C453.

Belongs to the glycosyl hydrolase 18 family. Chitinase class II subfamily. As to expression, expressed in the peritrophic matrix of the midgut, and only very weakly in fecal pellets.

The protein resides in the secreted. In terms of biological role, probably a non-catalytic chitinase-like protein, which binds to insoluble chitin and enhances the activity of the catalytic chitinases. Has weak chitin-binding activity. The sequence is that of Chitinase-like mite allergen Der p 18.0101 from Dermatophagoides pteronyssinus (European house dust mite).